Here is a 538-residue protein sequence, read N- to C-terminus: Mitochondria-eating protein (538 aa).

Residues 1-273 (MAENLKRLVS…PRSRSCSRSR (273 aa)) form an interaction with YWHAG/14-3-3 protein gamma region. Ser-85 carries the phosphoserine modification. The tract at residues 92-137 (GKPVDSKVPSLQNTFDRERRKDPSPRDRDMQQLDSNLNSTRSQLNQ) is disordered. The segment covering 106–122 (FDRERRKDPSPRDRDMQ) has biased composition (basic and acidic residues). Coiled-coil stretches lie at residues 118 to 186 (DRDM…ARHR) and 220 to 256 (QRDT…RSSR). Polar residues predominate over residues 123-137 (QLDSNLNSTRSQLNQ). A phosphoserine mark is found at Ser-156 and Ser-159. Disordered stretches follow at residues 174 to 227 (LKTL…EVTS) and 247 to 292 (KSAL…NRSK). Basic and acidic residues-rich tracts occupy residues 181 to 209 (EDAR…RRCE) and 216 to 227 (RNADQRDTEVTS). Low complexity predominate over residues 253–278 (RSSRSRSPSPAPRSRSCSRSRSASPS). A phosphoserine mark is found at Ser-285, Ser-287, and Ser-509.

It belongs to the MIEAP family. In terms of assembly, interacts (via coiled-coil domains) with BNIP3L (via BH3 domain). Interacts (via coiled-coil domains) with BNIP3 (via BH3 domain). Interacts with YWHAG/14-3-3 protein gamma; a protein that also plays a role in MALM.

It is found in the cytoplasm. Its subcellular location is the cytosol. The protein resides in the mitochondrion outer membrane. It localises to the mitochondrion matrix. Its function is as follows. Key regulator of mitochondrial quality that mediates the repairing or degradation of unhealthy mitochondria in response to mitochondrial damage. Mediator of mitochondrial protein catabolic process (also named MALM) by mediating the degradation of damaged proteins inside mitochondria by promoting the accumulation in the mitochondrial matrix of hydrolases that are characteristic of the lysosomal lumen. Also involved in mitochondrion degradation of damaged mitochondria by promoting the formation of vacuole-like structures (named MIV), which engulf and degrade unhealthy mitochondria by accumulating lysosomes. The physical interaction of SPATA18/MIEAP, BNIP3 and BNIP3L/NIX at the mitochondrial outer membrane regulates the opening of a pore in the mitochondrial double membrane in order to mediate the translocation of lysosomal proteins from the cytoplasm to the mitochondrial matrix. Binds cardiolipin. May form molecular condensates (non-membrane-bounded organelles) within mitochondria that compartmentalize and promote cardiolipin metabolism. The sequence is that of Mitochondria-eating protein (SPATA18) from Macaca fascicularis (Crab-eating macaque).